We begin with the raw amino-acid sequence, 154 residues long: 6,7-dimethyl-8-ribityllumazine synthase (154 aa).

Residues Phe-22, 56 to 58, and 80 to 82 each bind 5-amino-6-(D-ribitylamino)uracil; these read AFE and AVI. Residue 85–86 participates in (2S)-2-hydroxy-3-oxobutyl phosphate binding; it reads AT. The active-site Proton donor is His-88. Phe-113 contacts 5-amino-6-(D-ribitylamino)uracil. Residue Arg-127 coordinates (2S)-2-hydroxy-3-oxobutyl phosphate.

It belongs to the DMRL synthase family.

It catalyses the reaction (2S)-2-hydroxy-3-oxobutyl phosphate + 5-amino-6-(D-ribitylamino)uracil = 6,7-dimethyl-8-(1-D-ribityl)lumazine + phosphate + 2 H2O + H(+). It participates in cofactor biosynthesis; riboflavin biosynthesis; riboflavin from 2-hydroxy-3-oxobutyl phosphate and 5-amino-6-(D-ribitylamino)uracil: step 1/2. Functionally, catalyzes the formation of 6,7-dimethyl-8-ribityllumazine by condensation of 5-amino-6-(D-ribitylamino)uracil with 3,4-dihydroxy-2-butanone 4-phosphate. This is the penultimate step in the biosynthesis of riboflavin. This is 6,7-dimethyl-8-ribityllumazine synthase from Agathobacter rectalis (strain ATCC 33656 / DSM 3377 / JCM 17463 / KCTC 5835 / VPI 0990) (Eubacterium rectale).